A 396-amino-acid polypeptide reads, in one-letter code: DNA replication and repair protein RecF (396 aa).

30–37 (GANGSGKT) provides a ligand contact to ATP.

The protein belongs to the RecF family.

It is found in the cytoplasm. Its function is as follows. The RecF protein is involved in DNA metabolism; it is required for DNA replication and normal SOS inducibility. RecF binds preferentially to single-stranded, linear DNA. It also seems to bind ATP. In Thermomicrobium roseum (strain ATCC 27502 / DSM 5159 / P-2), this protein is DNA replication and repair protein RecF.